The primary structure comprises 445 residues: UPF0210 protein SPT_0285 (445 aa).

The protein belongs to the UPF0210 family. As to quaternary structure, homodimer.

The sequence is that of UPF0210 protein SPT_0285 from Streptococcus pneumoniae (strain Taiwan19F-14).